Here is a 585-residue protein sequence, read N- to C-terminus: Protein cereblon (585 aa).

2 disordered regions span residues 1 to 109 (MDEE…DLES) and 156 to 195 (FSQE…IGFD). Residues 80–95 (QDDTASEGSHPSSDMS) are compositionally biased toward polar residues. The span at 158–167 (QERRRSRTSE) shows a compositional bias: basic and acidic residues. Pro residues predominate over residues 178–189 (VDPPPQQPPRPP). One can recognise a Lon N-terminal domain in the interval 225–451 (HMLIFLHQHI…LIKSTFKDET (227 aa)). In terms of domain architecture, CULT spans 450–559 (ETLFFCRYCN…LAGSSVRIGK (110 aa)). Residues Cys455, Cys458, Cys524, and Cys527 each coordinate Zn(2+).

The protein belongs to the CRBN family. As to quaternary structure, likely a component of a DCX (DDB1-CUL4-X-box) protein ligase complex. May interact with pic/DDB1. Post-translationally, ubiquitinated. In terms of tissue distribution, expressed in the fat body (at protein level).

The protein resides in the nucleus. Its pathway is protein modification; protein ubiquitination. In terms of biological role, substrate recognition component of a DCX (DDB1-CUL4-X-box) E3 protein ligase complex that mediates the ubiquitination and subsequent proteasomal degradation of target proteins. Has an essential role in mediating growth by negatively regulating insulin signaling. It also has a role in maintaining presynaptic function in the neuromuscular junction synapses of third-instar larvae. The protein is Protein cereblon of Drosophila melanogaster (Fruit fly).